A 520-amino-acid chain; its full sequence is MTQKTDHQRVLIVDFGSQVTQLIARRVREAGVYCEIHPFDKAEAIVDEYAPSAIILSGGPASVLEADSPRIGRKLFDLGLPLLAICYGQQLLCDVLSGKVEGGHAGEFGRAELTIGKDSPMFQGLAGVGGVETVWMSHGDRVTAIPEGFEVIGTSTGAPFAAIANDAKKIYALQFHPEVYHTVNGPAMYRNFLFNIAGLKGDWTMAAFRQEMVQKIRDQVGDGKVICGLSGGVDSSVAAVLIHEAIGDQLTCVFVDTGLLRKNEADQVVTLFRDHYNIPLVHVDAGDLFLGELAGVSDPETKRKTIGRLFIDVFDKEAAKIEGATFLAQGTLYPDVVESVSARGGPSAVIKSHHNVGGLPDYMKLKLVEPLRELFKDEVRALGVELGLAPAFVGRHPFPGPGLAIRIPGEITPEKVKVLQDADAIYLEEIRNAGLYDQIWQAFAVLLPVKTVGVMGDARTYENVLALRAVTSTDGMTADFFEFPWPVLGKTATRIINEVRGVNRVVYDVTSKPPGTIEWE.

The Glutamine amidotransferase type-1 domain occupies 9 to 202 (RVLIVDFGSQ…LFNIAGLKGD (194 aa)). Cysteine 86 (nucleophile) is an active-site residue. Catalysis depends on residues histidine 176 and glutamate 178. Residues 203-395 (WTMAAFRQEM…LGLAPAFVGR (193 aa)) form the GMPS ATP-PPase domain. 230–236 (SGGVDSS) is a binding site for ATP.

In terms of assembly, homodimer.

The catalysed reaction is XMP + L-glutamine + ATP + H2O = GMP + L-glutamate + AMP + diphosphate + 2 H(+). It functions in the pathway purine metabolism; GMP biosynthesis; GMP from XMP (L-Gln route): step 1/1. Functionally, catalyzes the synthesis of GMP from XMP. This chain is GMP synthase [glutamine-hydrolyzing], found in Caulobacter vibrioides (strain ATCC 19089 / CIP 103742 / CB 15) (Caulobacter crescentus).